The sequence spans 470 residues: 6-phospho-beta-galactosidase (470 aa).

Residues Gln-19, His-116, Asn-159, Glu-160, and Asn-297 each contribute to the D-galactose 6-phosphate site. The Proton donor role is filled by Glu-160. Glu-375 (nucleophile) is an active-site residue. D-galactose 6-phosphate is bound by residues Ser-430, Trp-431, Lys-437, and Tyr-439.

The protein belongs to the glycosyl hydrolase 1 family.

The catalysed reaction is a 6-phospho-beta-D-galactoside + H2O = D-galactose 6-phosphate + an alcohol. Its pathway is carbohydrate metabolism; lactose degradation; D-galactose 6-phosphate and beta-D-glucose from lactose 6-phosphate: step 1/1. This is 6-phospho-beta-galactosidase from Staphylococcus aureus (strain USA300).